A 159-amino-acid chain; its full sequence is Major allergen Mal d 1 (159 aa).

The protein belongs to the BetVI family.

This Malus domestica (Apple) protein is Major allergen Mal d 1.